Reading from the N-terminus, the 512-residue chain is Serine/threonine-protein kinase SSN3 (512 aa).

Disordered stretches follow at residues 1-22 (MNNH…DRPW) and 75-94 (AEVS…TGSM). Residues 106-455 (YKVVGFISSG…AAAALQHPFF (350 aa)) enclose the Protein kinase domain. Residues 112–120 (ISSGTYGRV) and Lys-136 each bind ATP. Catalysis depends on Asp-238, which acts as the Proton acceptor. 2 disordered regions span residues 368–388 (QPPI…RQAA) and 476–512 (RRVS…VKEG). Positions 373–382 (HGGHHGHHYQ) are enriched in basic residues. Basic and acidic residues-rich tracts occupy residues 476-485 (RRVSQDDNDI) and 497-512 (GLPD…VKEG).

This sequence belongs to the protein kinase superfamily. CMGC Ser/Thr protein kinase family. CDC2/CDKX subfamily. As to quaternary structure, component of the SRB8-11 complex, a regulatory module of the Mediator complex. Mg(2+) serves as cofactor.

Its subcellular location is the nucleus. The enzyme catalyses L-seryl-[protein] + ATP = O-phospho-L-seryl-[protein] + ADP + H(+). The catalysed reaction is L-threonyl-[protein] + ATP = O-phospho-L-threonyl-[protein] + ADP + H(+). It carries out the reaction [DNA-directed RNA polymerase] + ATP = phospho-[DNA-directed RNA polymerase] + ADP + H(+). Functionally, component of the SRB8-11 complex. The SRB8-11 complex is a regulatory module of the Mediator complex which is itself involved in regulation of basal and activated RNA polymerase II-dependent transcription. The SRB8-11 complex may be involved in the transcriptional repression of a subset of genes regulated by Mediator. It may inhibit the association of the Mediator complex with RNA polymerase II to form the holoenzyme complex. The SRB8-11 complex phosphorylates the C-terminal domain (CTD) of the largest subunit of RNA polymerase II. This Chaetomium globosum (strain ATCC 6205 / CBS 148.51 / DSM 1962 / NBRC 6347 / NRRL 1970) (Soil fungus) protein is Serine/threonine-protein kinase SSN3 (SSN3).